Reading from the N-terminus, the 103-residue chain is Histone H4 (103 aa).

The span at 1 to 14 (MSGRGKGGKGLGKG) shows a compositional bias: gly residues. Residues 1-20 (MSGRGKGGKGLGKGGAKRHR) are disordered. An N6-acetyl-N6-methyllysine; alternate modification is found at Lys6. Residues Lys6, Lys9, and Lys13 each carry the N6-methyllysine; alternate modification. Position 13 is an N6-acetyl-N6-methyllysine; alternate (Lys13). Residues 17–21 (KRHRK) mediate DNA binding. Position 92 is an N6-glutaryllysine (Lys92).

The protein belongs to the histone H4 family. The nucleosome is a histone octamer containing two molecules each of H2A, H2B, H3 and H4 assembled in one H3-H4 heterotetramer and two H2A-H2B heterodimers. The octamer wraps approximately 147 bp of DNA. Post-translationally, glutarylation at Lys-92 (H4K91glu) destabilizes nucleosomes by promoting dissociation of the H2A-H2B dimers from nucleosomes.

The protein resides in the nucleus. The protein localises to the chromosome. Functionally, core component of nucleosome. Nucleosomes wrap and compact DNA into chromatin, limiting DNA accessibility to the cellular machineries which require DNA as a template. Histones thereby play a central role in transcription regulation, DNA repair, DNA replication and chromosomal stability. DNA accessibility is regulated via a complex set of post-translational modifications of histones, also called histone code, and nucleosome remodeling. This chain is Histone H4 (HHF1), found in Candida glabrata (strain ATCC 2001 / BCRC 20586 / JCM 3761 / NBRC 0622 / NRRL Y-65 / CBS 138) (Yeast).